Consider the following 95-residue polypeptide: UPF0235 protein Sama_2480 (95 aa).

Belongs to the UPF0235 family.

The sequence is that of UPF0235 protein Sama_2480 from Shewanella amazonensis (strain ATCC BAA-1098 / SB2B).